A 494-amino-acid polypeptide reads, in one-letter code: Argininosuccinate lyase (494 aa).

It belongs to the lyase 1 family. Argininosuccinate lyase subfamily.

The protein localises to the cytoplasm. The enzyme catalyses 2-(N(omega)-L-arginino)succinate = fumarate + L-arginine. The protein operates within amino-acid biosynthesis; L-arginine biosynthesis; L-arginine from L-ornithine and carbamoyl phosphate: step 3/3. The protein is Argininosuccinate lyase of Methanosphaerula palustris (strain ATCC BAA-1556 / DSM 19958 / E1-9c).